We begin with the raw amino-acid sequence, 836 residues long: Hypoxia-inducible factor 1-alpha (836 aa).

The tract at residues Met1–Arg30 is disordered. Residues Met1–Ala401 are interaction with TSGA10. Residues Glu7–Arg30 show a composition bias toward basic and acidic residues. The 54-residue stretch at Arg17 to Arg70 folds into the bHLH domain. The tract at residues Lys21–Arg30 is DNA-binding. A PAS 1 domain is found at Ser80–Val155. The tract at residues Arg170–Val191 is required for heterodimer formation with ARNT. The region spanning Pro228–Gly298 is the PAS 2 domain. The residue at position 247 (Ser247) is a Phosphoserine; by CK1. One can recognise a PAC domain in the interval Thr302–Ile345. The segment at Ser380 to Asp417 is N-terminal VHL recognition site. Residue Lys391 forms a Glycyl lysine isopeptide (Lys-Gly) (interchain with G-Cter in SUMO) linkage. An ODD region spans residues Ala401–Gln613. Pro402 carries the post-translational modification 4-hydroxyproline. Residue Lys476 forms a Glycyl lysine isopeptide (Lys-Gly) (interchain with G-Cter in SUMO) linkage. The segment at Gln492–Glu511 is disordered. An NTAD region spans residues Phe544–Arg588. The residue at position 545 (Lys545) is an N6-acetyllysine; alternate. Glycyl lysine isopeptide (Lys-Gly) (interchain with G-Cter in ubiquitin) cross-links involve residues Lys545, Lys551, and Lys560. Lys545 participates in a covalent cross-link: Glycyl lysine isopeptide (Lys-Gly) (interchain with G-Cter in ubiquitin); alternate. Ser564 is modified (phosphoserine; by GSK3-beta). Thr568 bears the Phosphothreonine; by GSK3-beta mark. A C-terminal VHL recognition site region spans residues Asp569–Phe585. A 4-hydroxyproline modification is found at Pro577. Position 589 is a phosphoserine; by PLK3 (Ser589). The segment at Ser589 to Gln795 is ID. Disordered stretches follow at residues Leu593 to Gly684 and Gln707 to His734. Ser602 carries the phosphoserine; by GSK3-beta modification. The span at Thr608–Pro620 shows a compositional bias: polar residues. The span at Thr621–Thr632 shows a compositional bias: low complexity. A compositionally biased stretch (basic and acidic residues) spans Asp633 to Lys647. Positions Ser652–Ala678 are enriched in polar residues. Phosphoserine; by PLK3 is present on Ser668. Lys719 bears the N6-acetyllysine mark. A Nuclear localization signal motif is present at residues Arg728 to Lys731. The CTAD stretch occupies residues Ser796–Asn836. Position 810 is an S-nitrosocysteine (Cys810). Asn813 bears the (3S)-3-hydroxyasparagine mark.

Interacts with the ARNT; forms a heterodimer that binds core DNA sequence 5'-TACGTG-3' within the hypoxia response element (HRE) of target gene promoters. Interacts with COPS5; the interaction increases the transcriptional activity of HIF1A through increased stability. Interacts with EP300 (via TAZ-type 1 domains); the interaction is stimulated in response to hypoxia and inhibited by CITED2. Interacts with CREBBP (via TAZ-type 1 domains). Interacts with NCOA1, NCOA2, APEX1 and HSP90. Interacts (hydroxylated within the ODD domain) with VHLL (via beta domain); the interaction, leads to polyubiquitination and subsequent HIF1A proteasomal degradation. During hypoxia, sumoylated HIF1A also binds VHL; the interaction promotes the ubiquitination of HIF1A. Interacts with SENP1; the interaction desumoylates HIF1A resulting in stabilization and activation of transcription. Interacts (via the ODD domain) with NAA10; the interaction appears not to acetylate HIF1A nor have any affect on protein stability, during hypoxia. Interacts with RWDD3; the interaction enhances HIF1A sumoylation. Interacts with TSGA10. Interacts with HIF3A. Interacts with RORA (via the DNA binding domain); the interaction enhances HIF1A transcription under hypoxia through increasing protein stability. Interaction with PSMA7 inhibits the transactivation activity of HIF1A under both normoxic and hypoxia-mimicking conditions. Interacts with USP20. Interacts with RACK1; promotes HIF1A ubiquitination and proteasome-mediated degradation. Interacts (via N-terminus) with USP19. Interacts with SIRT2. Interacts (deacetylated form) with EGLN1. Interacts with CBFA2T3. Interacts with HSP90AA1 and HSP90AB1. Interacts with DCUN1D1; this interaction increases the interaction between VHL and DCUN1D1. Interacts with HIF1AN. S-nitrosylation of Cys-810 may be responsible for increased recruitment of p300 coactivator necessary for transcriptional activity of HIF-1 complex. Post-translationally, requires phosphorylation for DNA-binding. Phosphorylation at Ser-247 by CSNK1D/CK1 represses kinase activity and impairs ARNT binding. Phosphorylation by GSK3-beta and PLK3 promote degradation by the proteasome. In terms of processing, sumoylated; with SUMO1 under hypoxia. Sumoylation is enhanced through interaction with RWDD3. Both sumoylation and desumoylation seem to be involved in the regulation of its stability during hypoxia. Sumoylation can promote either its stabilization or its VHL-dependent degradation by promoting hydroxyproline-independent HIF1A-VHL complex binding, thus leading to HIF1A ubiquitination and proteasomal degradation. Desumoylation by SENP1 increases its stability amd transcriptional activity. There is a disaccord between various publications on the effect of sumoylation and desumoylation on its stability and transcriptional activity. Acetylation of Lys-545 by ARD1 increases interaction with VHL and stimulates subsequent proteasomal degradation. Deacetylation of Lys-719 by SIRT2 increases its interaction with and hydroxylation by EGLN1 thereby inactivating HIF1A activity by inducing its proteasomal degradation. Post-translationally, ubiquitinated; in normoxia, following hydroxylation and interaction with VHL. Lys-545 appears to be the principal site of ubiquitination. Clioquinol, the Cu/Zn-chelator, inhibits ubiquitination through preventing hydroxylation at Asn-813. Ubiquitinated by E3 ligase VHL. Deubiquitinated by UCHL1. In terms of processing, the iron and 2-oxoglutarate dependent 3-hydroxylation of asparagine is (S) stereospecific within HIF CTAD domains. In normoxia, is hydroxylated on Pro-402 and Pro-577 in the oxygen-dependent degradation domain (ODD) by EGLN1/PHD2 and EGLN2/PHD1. EGLN3/PHD3 has also been shown to hydroxylate Pro-577. The hydroxylated prolines promote interaction with VHL, initiating rapid ubiquitination and subsequent proteasomal degradation. Deubiquitinated by USP20. Under hypoxia, proline hydroxylation is impaired and ubiquitination is attenuated, resulting in stabilization. In normoxia, is hydroxylated on Asn-813 by HIF1AN, thus abrogating interaction with CREBBP and EP300 and preventing transcriptional activation. Repressed by iron ion, via Fe(2+) prolyl hydroxylase (PHD) enzymes-mediated hydroxylation and subsequent proteasomal degradation. Ubiquitous.

It is found in the cytoplasm. The protein localises to the nucleus. The protein resides in the nucleus speckle. Its activity is regulated as follows. Induced by reactive oxygen species (ROS). Functionally, functions as a master transcriptional regulator of the adaptive response to hypoxia. Under hypoxic conditions, activates the transcription of over 40 genes, including erythropoietin, glucose transporters, glycolytic enzymes, vascular endothelial growth factor, HILPDA, and other genes whose protein products increase oxygen delivery or facilitate metabolic adaptation to hypoxia. Plays an essential role in embryonic vascularization, tumor angiogenesis and pathophysiology of ischemic disease. Heterodimerizes with ARNT; heterodimer binds to core DNA sequence 5'-TACGTG-3' within the hypoxia response element (HRE) of target gene promoters. Activation requires recruitment of transcriptional coactivators such as CREBBP and EP300. Activity is enhanced by interaction with NCOA1 and/or NCOA2. Interaction with redox regulatory protein APEX1 seems to activate CTAD and potentiates activation by NCOA1 and CREBBP. Involved in the axonal distribution and transport of mitochondria in neurons during hypoxia. The polypeptide is Hypoxia-inducible factor 1-alpha (Hif1a) (Mus musculus (Mouse)).